The chain runs to 548 residues: Protein swallow (548 aa).

3 disordered regions span residues 67 to 109 (AKTC…GRSS), 184 to 206 (NCQTHSNSDSNYNSNSNNSSSSF), and 358 to 428 (FSSV…ELIS). Positions 79–91 (QEDEDDYDEDVDG) are enriched in acidic residues. Residues 189–205 (SNSDSNYNSNSNNSSSS) show a composition bias toward low complexity. Phosphoserine is present on residues Ser362 and Ser368. The span at 388–402 (APNNSETSQPSSNDS) shows a compositional bias: polar residues. Positions 406-420 (VEAHEEERPSSRRQW) are enriched in basic and acidic residues. Phosphoserine occurs at positions 463, 471, 475, 483, 485, and 487.

May be a homo- or heterodimer.

Its subcellular location is the nucleus. Functionally, has a role in localizing bicoid mRNA at the anterior margin of the oocyte during oogenesis, and a poorly characterized role in nuclear divisions in early embryogenesis. In Drosophila melanogaster (Fruit fly), this protein is Protein swallow (swa).